A 146-amino-acid chain; its full sequence is Large ribosomal subunit protein uL13 (146 aa).

A disordered region spans residues 125–146; it reads YAGPKHPHAAQQPKVYEPRPRG.

This sequence belongs to the universal ribosomal protein uL13 family. In terms of assembly, part of the 50S ribosomal subunit.

Functionally, this protein is one of the early assembly proteins of the 50S ribosomal subunit, although it is not seen to bind rRNA by itself. It is important during the early stages of 50S assembly. This chain is Large ribosomal subunit protein uL13, found in Roseiflexus sp. (strain RS-1).